The primary structure comprises 54 residues: Ovomucoid (54 aa).

The 51-residue stretch at 4-54 (VDCSDYPKPACSLDYMPLCGSDSKTYSNKCNFCNAVVDSNGTLTLSHFEKC) folds into the Kazal-like domain. Intrachain disulfides connect Cys-6–Cys-36, Cys-14–Cys-33, and Cys-22–Cys-54. Residue Asn-43 is glycosylated (N-linked (GlcNAc...) asparagine).

Its subcellular location is the secreted. The protein is Ovomucoid of Chroicocephalus ridibundus (Black-headed gull).